We begin with the raw amino-acid sequence, 398 residues long: Na(+)/H(+) antiporter NhaA (398 aa).

12 helical membrane passes run 9–29 (MITHPAAGGVLLFAAALAAIV), 57–77 (LSLLVLVNDGLMAVFFLAVGL), 95–115 (AFPAIAALGGMVAPAVIYSLM), 124–144 (AGWAIPAATDIAFAVGVLALL), 154–174 (VFMLALAIIDDLGAIVIIALF), 177–197 (TALEPLALAAAGAVIGIMALM), 204–224 (FLSLYLLLGAVLWGCILLSGI), 226–246 (ATLAGVVVGGLIPLTLPSTEV), 255–275 (WLQPWVVYLILPLFAFANAGI), 288–308 (FLPLGIAAGLVVGKPLGIVLF), 329–349 (IAAAAMLCGIGFTMSIFIANL), and 359–379 (IVLAKVGILSGSVIAALLGYL).

It belongs to the NhaA Na(+)/H(+) (TC 2.A.33) antiporter family.

It is found in the cell inner membrane. The catalysed reaction is Na(+)(in) + 2 H(+)(out) = Na(+)(out) + 2 H(+)(in). Functionally, na(+)/H(+) antiporter that extrudes sodium in exchange for external protons. This chain is Na(+)/H(+) antiporter NhaA, found in Sodalis glossinidius (strain morsitans).